The following is a 279-amino-acid chain: Estrogen receptor beta (279 aa).

Residues 27-261 enclose the NR LBD domain; that stretch reads SPEQLVLTLL…DLLLEMLNAH (235 aa).

The protein belongs to the nuclear hormone receptor family. NR3 subfamily. Binds DNA as a homodimer. Can form a heterodimer with ESR1. Interacts with NCOA1, NCOA3, NCOA5 and NCOA6 coactivators, leading to a strong increase of transcription of target genes. Interacts with UBE1C and AKAP13. Interacts with DNTTIP2. Interacts with CCDC62 in the presence of estradiol/E2; this interaction seems to enhance the transcription of target genes. Interacts with DNAAF4. Interacts with PRMT2. Interacts with CCAR2 (via N-terminus) in a ligand-independent manner. Interacts with RBM39, in the presence of estradiol (E2). Interacts with STUB1/CHIP.

The protein localises to the nucleus. Its function is as follows. Nuclear hormone receptor. Binds estrogens with an affinity similar to that of ESR1/ER-alpha, and activates expression of reporter genes containing estrogen response elements (ERE) in an estrogen-dependent manner. The protein is Estrogen receptor beta (ESR2) of Macaca mulatta (Rhesus macaque).